We begin with the raw amino-acid sequence, 301 residues long: Probable alpha-L-glutamate ligase (301 aa).

Positions 104–287 constitute an ATP-grasp domain; the sequence is LQLLSRKGIG…VAGMIYEFIE (184 aa). ATP-binding positions include lysine 141, 178–179, aspartate 187, and 211–213; these read EF and RSN. Mg(2+) contacts are provided by aspartate 248, glutamate 260, and asparagine 262. The Mn(2+) site is built by aspartate 248, glutamate 260, and asparagine 262.

This sequence belongs to the RimK family. Mg(2+) serves as cofactor. Mn(2+) is required as a cofactor.

The sequence is that of Probable alpha-L-glutamate ligase from Vibrio vulnificus (strain CMCP6).